The primary structure comprises 80 residues: Cell division topological specificity factor (80 aa).

It belongs to the MinE family.

Its function is as follows. Prevents the cell division inhibition by proteins MinC and MinD at internal division sites while permitting inhibition at polar sites. This ensures cell division at the proper site by restricting the formation of a division septum at the midpoint of the long axis of the cell. This is Cell division topological specificity factor from Wolinella succinogenes (strain ATCC 29543 / DSM 1740 / CCUG 13145 / JCM 31913 / LMG 7466 / NCTC 11488 / FDC 602W) (Vibrio succinogenes).